The sequence spans 290 residues: Serpentine receptor class U-26 (290 aa).

The next 7 membrane-spanning stretches (helical) occupy residues 31–51 (LPMLFLLVPILYIPITIIIIL), 70–90 (LLSAISISQCMCLLFFLADFL), 112–134 (FITILTIFTYHINYSTMIFPFLV), 158–178 (FSIPFICVYPIIFTFFMFPAI), 185–205 (AYPFPFGAIIFRIERTFFGLV), 213–233 (NTLFWMTCCIITNFILLLLLI), and 262–282 (MIFSYLSNAMIVFLLLELHIV).

The protein belongs to the nematode receptor-like protein sru family.

It is found in the membrane. In Caenorhabditis elegans, this protein is Serpentine receptor class U-26 (sru-26).